Here is a 213-residue protein sequence, read N- to C-terminus: Glutathione S-transferase APIC (213 aa).

Residues 1 to 82 (MAIKVHGSPM…YIAHVYADNG (82 aa)) enclose the GST N-terminal domain. Glutathione-binding positions include Ser11, 12 to 13 (TA), 40 to 41 (HK), 53 to 54 (QV), and 66 to 67 (ES). The GST C-terminal domain occupies 89–213 (DPKKMPIMSV…WVKGLEKLQK (125 aa)).

Belongs to the GST superfamily. Phi family.

It carries out the reaction RX + glutathione = an S-substituted glutathione + a halide anion + H(+). Its function is as follows. Conjugation of reduced glutathione to a wide number of exogenous and endogenous hydrophobic electrophiles. The polypeptide is Glutathione S-transferase APIC (Nicotiana tabacum (Common tobacco)).